The chain runs to 317 residues: Ribose-phosphate pyrophosphokinase (317 aa).

Residues 43-45 (DGE) and 102-103 (RQ) each bind ATP. Positions 136 and 175 each coordinate Mg(2+). Lys-198 is a catalytic residue. D-ribose 5-phosphate contacts are provided by residues Arg-200, Asp-224, and 228-232 (DTAGT).

Belongs to the ribose-phosphate pyrophosphokinase family. Class I subfamily. Homohexamer. It depends on Mg(2+) as a cofactor.

It localises to the cytoplasm. It carries out the reaction D-ribose 5-phosphate + ATP = 5-phospho-alpha-D-ribose 1-diphosphate + AMP + H(+). The protein operates within metabolic intermediate biosynthesis; 5-phospho-alpha-D-ribose 1-diphosphate biosynthesis; 5-phospho-alpha-D-ribose 1-diphosphate from D-ribose 5-phosphate (route I): step 1/1. Functionally, involved in the biosynthesis of the central metabolite phospho-alpha-D-ribosyl-1-pyrophosphate (PRPP) via the transfer of pyrophosphoryl group from ATP to 1-hydroxyl of ribose-5-phosphate (Rib-5-P). This Oceanobacillus iheyensis (strain DSM 14371 / CIP 107618 / JCM 11309 / KCTC 3954 / HTE831) protein is Ribose-phosphate pyrophosphokinase.